The sequence spans 153 residues: MSRAPKLSLNLQFPAGKAWPEHKSLLPKATVAAWIKAALFADAELTVRFVDADEGRTLNRTYRGKDYATNVLTFAYAESEDDPVTGDLILCCPVVEKEANEQGKPLGAHYAHLLVHGTLHAQGYDHEDEDEAEEMEAIETEVLGKLGFPDPYE.

Zn(2+) is bound by residues His-116, His-120, and His-126.

This sequence belongs to the endoribonuclease YbeY family. The cofactor is Zn(2+).

The protein localises to the cytoplasm. Its function is as follows. Single strand-specific metallo-endoribonuclease involved in late-stage 70S ribosome quality control and in maturation of the 3' terminus of the 16S rRNA. In Paraburkholderia phymatum (strain DSM 17167 / CIP 108236 / LMG 21445 / STM815) (Burkholderia phymatum), this protein is Endoribonuclease YbeY.